The following is a 437-amino-acid chain: UDP-N-acetylmuramate--L-alanine ligase (437 aa).

108-114 contacts ATP; that stretch reads GAHGKTS.

Belongs to the MurCDEF family.

It localises to the cytoplasm. The enzyme catalyses UDP-N-acetyl-alpha-D-muramate + L-alanine + ATP = UDP-N-acetyl-alpha-D-muramoyl-L-alanine + ADP + phosphate + H(+). It participates in cell wall biogenesis; peptidoglycan biosynthesis. Cell wall formation. In Staphylococcus carnosus (strain TM300), this protein is UDP-N-acetylmuramate--L-alanine ligase.